We begin with the raw amino-acid sequence, 466 residues long: 3-isopropylmalate dehydratase large subunit (466 aa).

Residues cysteine 347, cysteine 407, and cysteine 410 each contribute to the [4Fe-4S] cluster site.

The protein belongs to the aconitase/IPM isomerase family. LeuC type 1 subfamily. In terms of assembly, heterodimer of LeuC and LeuD. [4Fe-4S] cluster serves as cofactor.

It carries out the reaction (2R,3S)-3-isopropylmalate = (2S)-2-isopropylmalate. The protein operates within amino-acid biosynthesis; L-leucine biosynthesis; L-leucine from 3-methyl-2-oxobutanoate: step 2/4. Catalyzes the isomerization between 2-isopropylmalate and 3-isopropylmalate, via the formation of 2-isopropylmaleate. The sequence is that of 3-isopropylmalate dehydratase large subunit from Vibrio vulnificus (strain YJ016).